We begin with the raw amino-acid sequence, 363 residues long: Pituitary-specific positive transcription factor 1 (363 aa).

The 9aaTAD motif lies at Ala-5 to Val-13. One can recognise a POU-specific domain in the interval Met-195 to Glu-269. Residues Lys-285–Lys-344 constitute a DNA-binding region (homeobox).

Belongs to the POU transcription factor family. Class-1 subfamily. As to expression, pituitary gland.

Its subcellular location is the nucleus. Its function is as follows. Transcription factor that activates growth hormone and prolactin genes. Specifically binds to the consensus sequence 5'-TAAAT-3'. The polypeptide is Pituitary-specific positive transcription factor 1 (POU1F1) (Gallus gallus (Chicken)).